The sequence spans 54 residues: UPF0391 membrane protein Rfer_1875 (54 aa).

The next 2 membrane-spanning stretches (helical) occupy residues 5-25 (AVVF…GIAA) and 30-50 (IGKI…LFGL).

This sequence belongs to the UPF0391 family.

The protein localises to the cell membrane. This chain is UPF0391 membrane protein Rfer_1875, found in Albidiferax ferrireducens (strain ATCC BAA-621 / DSM 15236 / T118) (Rhodoferax ferrireducens).